Here is a 1710-residue protein sequence, read N- to C-terminus: MKCTSVNIRNVLDISLKKKIKENTNLSDDEIIIIYKRFNYISSNGKLNYDNFEKSLGILGSIQNAYLYKSIFKAFDLNNDNYLDFYEFCVAINIMLKGNKKDKLKLSYRIVNAGFNSNEDACVHKSSCMVNKFNTKEDNNMNGDNINGDNNNNHNNINGDNNNNHNNINGDNNNNNHNNINGDNNNNHNNINGDNNNNNHNNINGDNNNNHNNINGDNNNNHNNSHNNNSHNNNNKAENSLGQPLNEKNINDPINKHRNSQSIIYNINDEYNEKIKKNKKQDYSNYITYENFEKIVLSINDIKRQLLGTGDEIITSQIKYTFRSLSILCDDGIYRMNFECYKKALKCNEFLKLLGIHTKVADVFLQHELLKRKDKNKTKNGTMRNRKKYKNDSNRIANHLIIKSFSESTNTRGSIINDSTSFLFLRKQKKKKKKKKKKKKKKEKKAILYERKSTFSSSMENKSQNKSQNKSHNKNIKSVSRILSRVNKLSSTELIPNECDHKPNEEVKSTSDVLTPIFFNNGDEKMNHDTDGNMVYHKNNVDDNLVDGDVVSQGKRCSFFSSCENKKNEENKSITFNDINSGNINTNSCIMNNMIVTKESNEEIINEEAQSSYIYNKNIFCSKYNTKKDKNEPLKCDLFECSFINNDKNIVRDEDSNHKNVRKTDDYFIIDDNNIFDNGPIIISKNKTNDRERKLLKTFSSSSLKKKSLLKNYNYHIKKKNKDPNVEDTNMLYHDDIKKEYDHKVTKNNKNTCNNNYYNNVSFNSSAYYEYHSDIDLIHFSNNLKKKKKKNVTSPRPSSKEYERKVTYHKECCSNERMKNIKVNESDLGMFCVNNDKTNIEDVKEKKACDVLNRGCIKEQVQCKISEFENDKGNEIYMQEFKKCIEKYKEYVNQGEGHLKDEEEEKNDDEEEGEDGEDDEEENDDDDDDEDGDDDEDGDDDNDDNDDNDDNDDNDDNDDNDDNDDNDDNDDNDEKSNIKIENKKDVPNIHNNNDDDGINCCTNLFKDDDTLSALEKNVTNNNLIKIMSAKYLYHKFLEYKDFMKNNTTLFSHFNKIYQHEDDKINTDNKDVLNYRPKHNNDINYYNIPCEDQIKSDEKKSLLNVEFGDDIIKKKFFISSVNSHYVMINNNLTKEQMLYLIRNILMSIEDYLKKEKNRDYNKIFFLFFSIFIYNTQNGGDQKEMHEDEKWDHTNINEDKNVEKNDDYKNLSNNENSVYYNTMLRESLWNKKKYIKLNIFKNIILVISIVRYFLHTITISQKYTSSYDSLDDSNMIKSMNSLKLNEINILLNRASEILEKYSLGSVENKKVYINKSNYYNSSKKGKLSVSLRQNKQKKTFHRILAVYFGHERWDLVMNMMIGIRISSIKKFSINDISNYFHHKDVIQLPTSNAQHKVIFKNYAPIIFKNIRNFYGIKSKEYLTSVGPEQVISNMVLGNLSTLSELLSEGKSGSLFYFTSNGKYIIKTVCRNIHNLSKKLLPKYYEHIKKNPDSLLTRLYGIHSIKYQNNLGRKKKKIYFIVMNNFFSSIVEIHRRYDIKGSLVGRTVPETKREDHTIALKDVDIDELGDIINIGPENKERLLKVLKADADFLKENMLLDYSLLFGIHYRELSKDVVNWEETKTNQINHIYDYKGNCIASRPFHQCDYGGIISVDKKKIFFFGIIDIFTKWSIKKKFEHTFRTIQKFDGKNISCIHPNAYAKRFVTFIENHMK.

An EF-hand domain is found at 68 to 98 (YKSIFKAFDLNNDNYLDFYEFCVAINIMLKG). Positions 76, 78, 80, 82, and 87 each coordinate Ca(2+). 3 disordered regions span residues 139–255 (NNMN…DPIN), 427–479 (KQKK…IKSV), and 895–993 (GEGH…HNNN). Positions 140–235 (NMNGDNINGD…HNNNSHNNNN (96 aa)) are enriched in low complexity. Over residues 236–248 (KAENSLGQPLNEK) the composition is skewed to polar residues. Over residues 427–444 (KQKKKKKKKKKKKKKKEK) the composition is skewed to basic residues. The segment covering 456 to 468 (SSSMENKSQNKSQ) has biased composition (low complexity). Acidic residues predominate over residues 902–973 (EEEEKNDDEE…DDNDDNDDND (72 aa)). Basic and acidic residues predominate over residues 974-987 (EKSNIKIENKKDVP). The 376-residue stretch at 1334-1709 (QKKTFHRILA…RFVTFIENHM (376 aa)) folds into the PIPK domain.

It catalyses the reaction a 1,2-diacyl-sn-glycero-3-phospho-(1D-myo-inositol 4-phosphate) + ATP = a 1,2-diacyl-sn-glycero-3-phospho-(1D-myo-inositol-4,5-bisphosphate) + ADP + H(+). Its activity is regulated as follows. Catalytic activity is increase by myristoylated ARF1. Phosphatidic acid has no effect on catalytic activity. Its function is as follows. Catalyzes the phosphorylation of phosphatidylinositol 4-phosphate (PtdIns(4)P/PI4P) to form phosphatidylinositol 4,5-bisphosphate (PtdIns(4,5)P2/PIP2), a lipid second messenger that regulates several cellular processes. The sequence is that of Phosphatidylinositol 4-phosphate 5-kinase from Plasmodium falciparum (isolate 3D7).